The sequence spans 234 residues: (5-formylfuran-3-yl)methyl phosphate synthase (234 aa).

The Schiff-base intermediate with substrate role is filled by lysine 27. The active-site Proton acceptor is the lysine 85.

The protein belongs to the MfnB family.

The catalysed reaction is 2 D-glyceraldehyde 3-phosphate = 4-(hydroxymethyl)-2-furancarboxaldehyde phosphate + phosphate + 2 H2O. Its pathway is cofactor biosynthesis; methanofuran biosynthesis. Its function is as follows. Catalyzes the formation of 4-(hydroxymethyl)-2-furancarboxaldehyde phosphate (4-HFC-P) from two molecules of glyceraldehyde-3-P (GA-3-P). The sequence is that of (5-formylfuran-3-yl)methyl phosphate synthase from Methanosarcina barkeri (strain Fusaro / DSM 804).